The following is a 443-amino-acid chain: Dihydroorotate dehydrogenase (quinone), mitochondrial (443 aa).

The N-terminal 21 residues, 1–21 (MYQRSLFRGVAQGLKRSSVRF), are a transit peptide targeting the mitochondrion. A helical transmembrane segment spans residues 38 to 54 (WKLLSVIGSFTAGVAIY). Residues 122 to 126 (AGFDK) and S146 contribute to the FMN site. K126 is a substrate binding site. The residue at position 168 (S168) is a Phosphoserine. 171–175 (NRYGF) is a substrate binding site. FMN-binding residues include N234 and N264. Residue 264–269 (NVSSPN) coordinates substrate. The active-site Nucleophile is S267. FMN is bound at residue K306. Residue 335-336 (NT) coordinates substrate. Residues G358, G387, and 408-409 (YT) each bind FMN.

Belongs to the dihydroorotate dehydrogenase family. Type 2 subfamily. FMN serves as cofactor.

It localises to the mitochondrion inner membrane. The enzyme catalyses (S)-dihydroorotate + a quinone = orotate + a quinol. The protein operates within pyrimidine metabolism; UMP biosynthesis via de novo pathway; orotate from (S)-dihydroorotate (quinone route): step 1/1. Its function is as follows. In the de novo pyrimidine biosynthesis pathway, catalyzes the stereospecific oxidation of (S)-dihydroorotate to orotate with reduction of flavin and the transfer of electrons to ubiquinone, which is part of the respiratory chain. Does not use fumarate and NAD as electron acceptors. The polypeptide is Dihydroorotate dehydrogenase (quinone), mitochondrial (ura3) (Schizosaccharomyces pombe (strain 972 / ATCC 24843) (Fission yeast)).